Here is a 417-residue protein sequence, read N- to C-terminus: Voltage-gated potassium channel Kch (417 aa).

The Cytoplasmic portion of the chain corresponds to 1-21 (MSHWATFKQTATNLWVTLRHD). Residues 22–41 (ILALAVFLNGLLIFKTIYGM) traverse the membrane as a helical segment. The Periplasmic segment spans residues 42–63 (SVNLLDIFHIKAFSELDLSLLA). The helical transmembrane segment at 64-83 (NAPLFMLGVFLVLNSIGLLF) threads the bilayer. Over 84–86 (RAK) the chain is Cytoplasmic. A helical transmembrane segment spans residues 87-104 (LAWAISIILLLIALIYTL). Residues 105-110 (HFYPWL) are Periplasmic-facing. A helical transmembrane segment spans residues 111–127 (KFSIGFCIFTLVFLLIL). At 128–140 (RKDFSHSSAAAGT) the chain is on the cytoplasmic side. The chain crosses the membrane as a helical span at residues 141 to 160 (IFAFISFTTLLFYSTYGALY). Residues 161–199 (LSEGFNPRIESLMTAFYFSIETMSTVGYGDIVPVSESAR) lie on the Periplasmic side of the membrane. The short motif at 185-190 (TVGYGD) is the Selectivity filter element. The chain crosses the membrane as a helical span at residues 200-220 (LFTISVIISGITVFATSMTSI). The Cytoplasmic portion of the chain corresponds to 221 to 417 (FGPLIRGGFN…KADSKESAQK (197 aa)). An RCK N-terminal domain is found at 243 to 363 (KDHFIVCGHS…IKMVHPDIIL (121 aa)).

This sequence belongs to the potassium channel family. Dimer.

It is found in the cell inner membrane. Its function is as follows. K(+)-specific ion channel. May play a role in the defense against osmotic shock. The polypeptide is Voltage-gated potassium channel Kch (kch) (Escherichia coli (strain K12)).